The sequence spans 115 residues: U3-lycotoxin-Ls1b (115 aa).

A signal peptide spans 1-20; sequence MKFVLLFGVLLVTLFSYSSA. Positions 21-44 are excised as a propeptide; sequence EMLDDFDQADEDELLSLIEKEEAR. Intrachain disulfides connect cysteine 48–cysteine 63, cysteine 55–cysteine 72, cysteine 62–cysteine 87, and cysteine 74–cysteine 85.

Belongs to the neurotoxin 19 (CSTX) family. 01 subfamily. As to expression, expressed by the venom gland.

It localises to the secreted. The polypeptide is U3-lycotoxin-Ls1b (Lycosa singoriensis (Wolf spider)).